The chain runs to 279 residues: NAD kinase (279 aa).

The active-site Proton acceptor is Asp-63. NAD(+)-binding positions include Asp-63–Gly-64, Arg-68, Asn-133–Glu-134, and Asp-163.

The protein belongs to the NAD kinase family. It depends on a divalent metal cation as a cofactor.

It is found in the cytoplasm. It carries out the reaction NAD(+) + ATP = ADP + NADP(+) + H(+). Functionally, involved in the regulation of the intracellular balance of NAD and NADP, and is a key enzyme in the biosynthesis of NADP. Catalyzes specifically the phosphorylation on 2'-hydroxyl of the adenosine moiety of NAD to yield NADP. The chain is NAD kinase from Protochlamydia amoebophila (strain UWE25).